The primary structure comprises 274 residues: Diaminopimelate epimerase (274 aa).

3 residues coordinate substrate: Asn11, Gln44, and Asn64. Cys73 serves as the catalytic Proton donor. Residues 74–75, Asn157, Asn190, and 208–209 each bind substrate; these read GN and ER. The active-site Proton acceptor is Cys217. 218 to 219 lines the substrate pocket; that stretch reads GS.

Belongs to the diaminopimelate epimerase family. Homodimer.

It localises to the cytoplasm. The catalysed reaction is (2S,6S)-2,6-diaminopimelate = meso-2,6-diaminopimelate. Its pathway is amino-acid biosynthesis; L-lysine biosynthesis via DAP pathway; DL-2,6-diaminopimelate from LL-2,6-diaminopimelate: step 1/1. In terms of biological role, catalyzes the stereoinversion of LL-2,6-diaminopimelate (L,L-DAP) to meso-diaminopimelate (meso-DAP), a precursor of L-lysine and an essential component of the bacterial peptidoglycan. The protein is Diaminopimelate epimerase of Pectobacterium carotovorum subsp. carotovorum (strain PC1).